We begin with the raw amino-acid sequence, 373 residues long: Outer membrane protein assembly factor BamC (373 aa).

An N-terminal signal peptide occupies residues 1–16 (MLKQVTPLVLIAAVTA). The N-palmitoyl cysteine moiety is linked to residue Cys-17. The S-diacylglycerol cysteine moiety is linked to residue Cys-17.

This sequence belongs to the BamC family. As to quaternary structure, part of the Bam complex.

The protein resides in the cell outer membrane. Part of the outer membrane protein assembly complex, which is involved in assembly and insertion of beta-barrel proteins into the outer membrane. The chain is Outer membrane protein assembly factor BamC from Shewanella sediminis (strain HAW-EB3).